Consider the following 146-residue polypeptide: Hemoglobin subunit beta (146 aa).

One can recognise a Globin domain in the interval 2–146 (HWSAEEKQLI…VAHALARKYH (145 aa)). Positions 63 and 92 each coordinate heme b.

It belongs to the globin family. As to quaternary structure, heterotetramer of two alpha chains and two beta chains. As to expression, red blood cells.

Functionally, involved in oxygen transport from the lung to the various peripheral tissues. This chain is Hemoglobin subunit beta (HBB), found in Anseranas semipalmata (Magpie goose).